Consider the following 153-residue polypeptide: Putative OPA3-like protein CG43998 (153 aa).

The stretch at 101 to 153 (ELSKTYTKTKKQNQEIEDQKRVLDECVDCISADVERNQREINWIKAALKNVEK) forms a coiled coil.

It belongs to the OPA3 family.

This chain is Putative OPA3-like protein CG43998, found in Drosophila melanogaster (Fruit fly).